Here is a 126-residue protein sequence, read N- to C-terminus: Large-conductance mechanosensitive channel (126 aa).

2 helical membrane passes run 17-37 and 70-90; these read VDLA…SSFI and GLFL…FLII.

This sequence belongs to the MscL family. In terms of assembly, homopentamer.

It is found in the cell inner membrane. Channel that opens in response to stretch forces in the membrane lipid bilayer. May participate in the regulation of osmotic pressure changes within the cell. The chain is Large-conductance mechanosensitive channel from Flavobacterium johnsoniae (strain ATCC 17061 / DSM 2064 / JCM 8514 / BCRC 14874 / CCUG 350202 / NBRC 14942 / NCIMB 11054 / UW101) (Cytophaga johnsonae).